A 1277-amino-acid chain; its full sequence is Membrane-associated guanylate kinase, WW and PDZ domain-containing protein 2 (1277 aa).

The PDZ domain occupies 17–101; the sequence is ESVIGRNPEG…PLRLKCVKQG (85 aa). The 175-residue stretch at 109–283 folds into the Guanylate kinase-like domain; that stretch reads RHYLNLRFQK…APVYSQPEEL (175 aa). A disordered region spans residues 205-308; sequence PGATPSAEGK…EDSDPLPDNW (104 aa). The segment covering 281 to 296 has biased composition (basic and acidic residues); it reads EELKDQMDDTKSTKPE. WW domains lie at 302–335 and 348–381; these read DPLPDNWEMAYTEKGEVYFIDHNTKTTSWLDPRL and NELPYGWEKIDDPIYGTYYVDHINRRTQFENPVL. The segment at 302-381 is interaction with DDN; it reads DPLPDNWEMA…RRTQFENPVL (80 aa). At Tyr-362 the chain carries Phosphotyrosine. The PDZ 1 domain maps to 426–510; it reads STTLKKSNMG…SVNLVLCRGY (85 aa). The tract at residues 556–575 is disordered; it reads QSVPDITDRPPHSLHSMPAD. The PDZ 2 domain maps to 605–683; the sequence is TLTIVKGAKG…ETSLIIHRGG (79 aa). Ser-686 is subject to Phosphoserine. One can recognise a PDZ 3 domain in the interval 778–860; sequence DVHLRRMESG…NGQVNLTVRR (83 aa). A Phosphotyrosine modification is found at Tyr-827. Residues 869–913 are disordered; sequence CPENGRSPGSVSTHHSSPRSDYATYANSNHAAPSNNASPPEGFAS. 2 positions are modified to phosphoserine: Ser-884 and Ser-885. Over residues 894–908 the composition is skewed to low complexity; that stretch reads ANSNHAAPSNNASPP. A PDZ 4 domain is found at 920–1010; it reads DVIIHRKENE…SVTLRIIPQE (91 aa). The segment covering 1011–1042 has biased composition (polar residues); it reads ELNNPTSAPSSEKQSPMAQQHSPLAQQHSPLA. Positions 1011-1130 are disordered; sequence ELNNPTSAPS…PDTRQYPLSD (120 aa). The segment covering 1069–1085 has biased composition (basic and acidic residues); it reads NSYRSEVKARQDVKPDI. Positions 1141 to 1223 constitute a PDZ 5 domain; it reads TVDMEKGAKG…RVRLLLKRGT (83 aa).

This sequence belongs to the MAGUK family. Interacts (via its WW domains) with DRPLA. Interacts with CTNNB1, ACVR2A, SMAD2 and SMAD3. Part of a complex consisting of MAGI2/ARIP1, ACVR2A, ACVR1B and SMAD3. May interact with HTR2A and IGSF9. Interacts with HTR4. Interacts (via guanylate kinase domain) with DLGAP1. Interacts (via PDZ domains) with GRIN2A, GRID2 and NLGN1. Interacts with CTNND2. Interacts with MAGUIN-1. Interacts (via its second PDZ domain) with PTEN (via unphosphorylated C-terminus); this interaction diminishes the degradation rate of PTEN. Found in a complex, at least composed of KIDINS220, MAGI2, NTRK1 and RAPGEF2; the complex is mainly formed at late endosomes in a NGF-dependent manner. Interacts with RAPGEF2; the interaction occurs before or after nerve growth factor (NGF) stimulation. Isoform 1 interacts (via PDZ domain) with KIDINS220 isoform 2 (via C-terminal domain). Interacts with DDN. Identified in a complex with ACTN4, CASK, IQGAP1, NPHS1, SPTAN1 and SPTBN1. Interacts with DLL1. Found in a complex with IGSF9B and NLGN2; the interaction with IGSF9B is mediated via the PDZ 5 and PDZ 6 domains, while the interaction with NLGN2 is mediated via the WW1, WW2 and PDZ2 domains. Interacts (via PDZ 6 domain) with USH1G (via SAM domain); the interaction is triggered by phosphorylation of USH1G by CK2 and negatively regulates MAGI2-mediated endocytosis. Expressed in the foot process layer of podocytes of the kidney glomeruli but not in tubules (at protein level). Expressed in the brain.

The protein resides in the cytoplasm. The protein localises to the late endosome. It is found in the synapse. It localises to the synaptosome. Its subcellular location is the cell membrane. The protein resides in the cytoskeleton. The protein localises to the microtubule organizing center. It is found in the centrosome. It localises to the cell projection. Its subcellular location is the cilium. The protein resides in the centriole. The protein localises to the photoreceptor inner segment. It is found in the photoreceptor outer segment. In terms of biological role, seems to act as scaffold molecule at synaptic junctions by assembling neurotransmitter receptors and cell adhesion proteins. Plays a role in nerve growth factor (NGF)-induced recruitment of RAPGEF2 to late endosomes and neurite outgrowth. May play a role in regulating activin-mediated signaling in neuronal cells. Enhances the ability of PTEN to suppress AKT1 activation. Plays a role in receptor-mediated clathrin-dependent endocytosis which is required for ciliogenesis. The chain is Membrane-associated guanylate kinase, WW and PDZ domain-containing protein 2 (Magi2) from Rattus norvegicus (Rat).